The sequence spans 1034 residues: Glycine dehydrogenase (decarboxylating) B, mitochondrial (1034 aa).

The N-terminal 63 residues, 1 to 63, are a transit peptide targeting the mitochondrion; the sequence is MERARRLAIL…LNGFGSQVRT (63 aa). Residue lysine 770 is modified to N6-(pyridoxal phosphate)lysine.

This sequence belongs to the GcvP family. Homodimer. The glycine cleavage system is composed of four proteins: P, T, L and H. Pyridoxal 5'-phosphate serves as cofactor.

The protein resides in the mitochondrion. It carries out the reaction N(6)-[(R)-lipoyl]-L-lysyl-[glycine-cleavage complex H protein] + glycine + H(+) = N(6)-[(R)-S(8)-aminomethyldihydrolipoyl]-L-lysyl-[glycine-cleavage complex H protein] + CO2. The glycine cleavage system catalyzes the degradation of glycine. The P protein binds the alpha-amino group of glycine through its pyridoxal phosphate cofactor; CO(2) is released and the remaining methylamine moiety is then transferred to the lipoamide cofactor of the H protein. The chain is Glycine dehydrogenase (decarboxylating) B, mitochondrial (GDCSPB) from Flaveria pringlei.